The sequence spans 298 residues: Urease accessory protein UreD (298 aa).

It belongs to the UreD family. As to quaternary structure, ureD, UreF and UreG form a complex that acts as a GTP-hydrolysis-dependent molecular chaperone, activating the urease apoprotein by helping to assemble the nickel containing metallocenter of UreC. The UreE protein probably delivers the nickel.

The protein localises to the cytoplasm. Its function is as follows. Required for maturation of urease via the functional incorporation of the urease nickel metallocenter. This chain is Urease accessory protein UreD, found in Marinobacter nauticus (strain ATCC 700491 / DSM 11845 / VT8) (Marinobacter aquaeolei).